Here is a 364-residue protein sequence, read N- to C-terminus: Aminomethyltransferase (364 aa).

The protein belongs to the GcvT family. The glycine cleavage system is composed of four proteins: P, T, L and H.

It carries out the reaction N(6)-[(R)-S(8)-aminomethyldihydrolipoyl]-L-lysyl-[protein] + (6S)-5,6,7,8-tetrahydrofolate = N(6)-[(R)-dihydrolipoyl]-L-lysyl-[protein] + (6R)-5,10-methylene-5,6,7,8-tetrahydrofolate + NH4(+). Its function is as follows. The glycine cleavage system catalyzes the degradation of glycine. The polypeptide is Aminomethyltransferase (Thermotoga petrophila (strain ATCC BAA-488 / DSM 13995 / JCM 10881 / RKU-1)).